A 390-amino-acid chain; its full sequence is Matrix metalloproteinase-23 (390 aa).

Over 1–19 (MGRGARVPSEAPGAGVERR) the chain is Cytoplasmic. The propeptide occupies 1–78 (MGRGARVPSE…PGPLAPRRRR (78 aa)). Residues 20 to 40 (WLGAALVALCLLPALVLLARL) form a helical; Signal-anchor for type II membrane protein membrane-spanning segment. Residues 41–390 (GAPAVPAWSA…TYSWRVRVRG (350 aa)) lie on the Lumenal side of the membrane. 2 N-linked (GlcNAc...) asparagine glycosylation sites follow: Asn92 and Asn148. His211 contributes to the Zn(2+) binding site. The active site involves Glu212. Zn(2+) contacts are provided by His215 and His221. The N-linked (GlcNAc...) asparagine glycan is linked to Asn232. In terms of domain architecture, ShKT spans 255–289 (CLDRLFVCASWARRGFCDARRRLMKRLCPSSCDFC). 3 disulfide bridges follow: Cys255-Cys289, Cys262-Cys282, and Cys271-Cys286. Residues 295 to 380 (PTVATTPPPP…VVRRQQRVLT (86 aa)) form the Ig-like C2-type domain. Asn316 carries N-linked (GlcNAc...) asparagine glycosylation. An intrachain disulfide couples Cys321 to Cys370.

The protein belongs to the peptidase M10A family. Zn(2+) is required as a cofactor. N-glycosylated. Post-translationally, proteolytic cleavage might yield an active form. Predominantly expressed in ovary, testis and prostate.

Its subcellular location is the endoplasmic reticulum membrane. The protein resides in the membrane. With respect to regulation, inhibited by TIMP2. Protease. May regulate the surface expression of some potassium channels by retaining them in the endoplasmic reticulum. The chain is Matrix metalloproteinase-23 (MMP23B) from Homo sapiens (Human).